The sequence spans 282 residues: Probable endonuclease 4 (282 aa).

His-69, His-109, Glu-145, Asp-179, His-182, His-216, Asp-229, His-231, and Glu-261 together coordinate Zn(2+).

The protein belongs to the AP endonuclease 2 family. It depends on Zn(2+) as a cofactor.

It catalyses the reaction Endonucleolytic cleavage to 5'-phosphooligonucleotide end-products.. In terms of biological role, endonuclease IV plays a role in DNA repair. It cleaves phosphodiester bonds at apurinic or apyrimidinic (AP) sites, generating a 3'-hydroxyl group and a 5'-terminal sugar phosphate. This Campylobacter fetus subsp. fetus (strain 82-40) protein is Probable endonuclease 4.